We begin with the raw amino-acid sequence, 185 residues long: uncharacterized protein (185 aa).

This is an uncharacterized protein from Magallana gigas (Pacific oyster).